The chain runs to 126 residues: MTELETSIKIDVKTEYIEDQSSPNDERYLFRYTITIINLGKEPVTLKTRYWSITDSNQHLSVVQGAGVVGETPTIEPDTAYQYTSGTVLETPFGVMEGNYGMVTENGEMFKAKIPPFRLSIPGLLH.

An ApaG domain is found at 2 to 126 (TELETSIKID…FRLSIPGLLH (125 aa)).

In Shewanella woodyi (strain ATCC 51908 / MS32), this protein is Protein ApaG.